The primary structure comprises 247 residues: Cell division protein ZapD (247 aa).

Belongs to the ZapD family. In terms of assembly, interacts with FtsZ.

The protein resides in the cytoplasm. Cell division factor that enhances FtsZ-ring assembly. Directly interacts with FtsZ and promotes bundling of FtsZ protofilaments, with a reduction in FtsZ GTPase activity. The protein is Cell division protein ZapD of Shigella boydii serotype 4 (strain Sb227).